Here is a 100-residue protein sequence, read N- to C-terminus: Integration host factor subunit alpha (100 aa).

It belongs to the bacterial histone-like protein family. As to quaternary structure, heterodimer of an alpha and a beta chain.

Functionally, this protein is one of the two subunits of integration host factor, a specific DNA-binding protein that functions in genetic recombination as well as in transcriptional and translational control. The chain is Integration host factor subunit alpha from Caulobacter vibrioides (strain ATCC 19089 / CIP 103742 / CB 15) (Caulobacter crescentus).